A 246-amino-acid chain; its full sequence is rRNA methyltransferase 2, mitochondrial (246 aa).

Residues 1-18 constitute a mitochondrion transit peptide; sequence MAGYLKLVCVSFQRQGFH. S-adenosyl-L-methionine-binding positions include 83–86, Asp-112, 129–130, and Asp-154; these read PGAW and DV. The Proton acceptor role is filled by Lys-194.

This sequence belongs to the class I-like SAM-binding methyltransferase superfamily. RNA methyltransferase RlmE family. As to expression, widely expressed, with highest expression in muscle, placenta, and heart.

The protein localises to the mitochondrion. It catalyses the reaction uridine(1369) in 16S rRNA + S-adenosyl-L-methionine = 2'-O-methyluridine(1369) in 16S rRNA + S-adenosyl-L-homocysteine + H(+). S-adenosyl-L-methionine-dependent 2'-O-ribose methyltransferase that catalyzes the formation of 2'-O-methyluridine at position 1369 (Um1369) in the 16S mitochondrial large subunit ribosomal RNA (mtLSU rRNA), a universally conserved modification in the peptidyl transferase domain of the mtLSU rRNA. This activity may require prior 2'-O-methylguanosine modification at position 1370 (Gm1370) by MRM3. Essential for late-stage assembly of mtLSU required for efficient translation of mitochondrial DNA encoded proteins; methyltransferase activity is not required for this function. Essential for mitochondrial respiratory function. This Homo sapiens (Human) protein is rRNA methyltransferase 2, mitochondrial.